We begin with the raw amino-acid sequence, 98 residues long: Large ribosomal subunit protein uL23 (98 aa).

This sequence belongs to the universal ribosomal protein uL23 family. In terms of assembly, part of the 50S ribosomal subunit. Contacts protein L29, and trigger factor when it is bound to the ribosome.

Its function is as follows. One of the early assembly proteins it binds 23S rRNA. One of the proteins that surrounds the polypeptide exit tunnel on the outside of the ribosome. Forms the main docking site for trigger factor binding to the ribosome. The polypeptide is Large ribosomal subunit protein uL23 (Lactobacillus gasseri (strain ATCC 33323 / DSM 20243 / BCRC 14619 / CIP 102991 / JCM 1131 / KCTC 3163 / NCIMB 11718 / NCTC 13722 / AM63)).